A 115-amino-acid polypeptide reads, in one-letter code: Basic leucine zipper transcriptional factor ATF-like (115 aa).

Positions 1–57 (MQQEPDRNEQGYCSSPPSSNKQDSSDDTKKIQRREKNRIAAQKSRQRQTQKADSLHI) are disordered. The region spanning 27 to 90 (DTKKIQRREK…KYLTCVLSTH (64 aa)) is the bZIP domain. Residues 29–51 (KKIQRREKNRIAAQKSRQRQTQK) form a basic motif region. Residues 55 to 83 (LHIESENLERLNSALRGEISGLREELKYL) form a leucine-zipper region.

It belongs to the bZIP family.

The protein resides in the nucleus. The protein localises to the cytoplasm. In terms of biological role, AP-1 family transcription factor that controls the differentiation of lineage-specific cells in the immune system: specifically mediates the differentiation of T-helper 17 cells (Th17), follicular T-helper cells (TfH), CD8(+) dendritic cells and class-switch recombination (CSR) in B-cells. In Xenopus tropicalis (Western clawed frog), this protein is Basic leucine zipper transcriptional factor ATF-like (batf).